The primary structure comprises 331 residues: Serine/threonine-protein phosphatase 6 catalytic subunit (331 aa).

Residues Asp79, His81, Asp107, and Asn139 each contribute to the Mn(2+) site. The active-site Proton donor is the His140. Mn(2+) is bound by residues His189 and His264.

It belongs to the PPP phosphatase family. PP-6 (PP-V) subfamily. As to quaternary structure, forms a complex composed of catalytic subunit pph-6 and regulatory subunit saps-1; the interaction increases pph-6 and saps-1 protein stability. It depends on Mn(2+) as a cofactor.

Its subcellular location is the cytoplasm. It is found in the cell cortex. The protein resides in the cytoskeleton. The protein localises to the spindle pole. It carries out the reaction O-phospho-L-seryl-[protein] + H2O = L-seryl-[protein] + phosphate. The enzyme catalyses O-phospho-L-threonyl-[protein] + H2O = L-threonyl-[protein] + phosphate. In terms of biological role, catalytic subunit of protein phosphatase 6 (PP6). In complex with saps-1, promotes actomyosin contractility during cytokinesis by regulating the organization of cortical non-muscle myosin II nmy-2 and thus contributing to correct spindle positioning. Also required for the proper generation of pulling forces on spindle poles during anaphase by regulating the cortical localization of gpr-1, gpr-2 and lin-5. In Caenorhabditis elegans, this protein is Serine/threonine-protein phosphatase 6 catalytic subunit.